The chain runs to 640 residues: Choline O-acetyltransferase (640 aa).

Serine 17 carries the post-translational modification Phosphoserine. Residue histidine 334 is the Proton acceptor of the active site. Serine 365 is subject to Phosphoserine. CoA-binding positions include 412–424 (GKTF…YSPD), serine 450, and glutamine 551. A disordered region spans residues 614 to 640 (CSSRQPADSKPPAPKEKARGPSQAKQS).

The protein belongs to the carnitine/choline acetyltransferase family. In terms of assembly, monomer.

It catalyses the reaction choline + acetyl-CoA = acetylcholine + CoA. Its function is as follows. Catalyzes the reversible synthesis of acetylcholine (ACh) from acetyl CoA and choline at cholinergic synapses. The polypeptide is Choline O-acetyltransferase (Chat) (Rattus norvegicus (Rat)).